The primary structure comprises 950 residues: Leucine--tRNA ligase (950 aa).

The short motif at 72 to 83 (PYPSGEGLHVGH) is the 'HIGH' region element. Positions 722–726 (KIGKS) match the 'KMSKS' region motif. ATP is bound at residue Lys725.

The protein belongs to the class-I aminoacyl-tRNA synthetase family.

The protein resides in the cytoplasm. The enzyme catalyses tRNA(Leu) + L-leucine + ATP = L-leucyl-tRNA(Leu) + AMP + diphosphate. This Mycobacterium sp. (strain JLS) protein is Leucine--tRNA ligase.